The primary structure comprises 516 residues: Probable serine/threonine-protein kinase WNK3 (516 aa).

Positions 22-280 (GRYKEVLGKG…AKELLDDPFL (259 aa)) constitute a Protein kinase domain. ATP-binding positions include 102–105 (TEVF) and lysine 152. The Proton acceptor role is filled by aspartate 169. A disordered region spans residues 426-451 (SSPKAGAGDSRSPFAPRSNSKLSSAQ). Residues 442-451 (RSNSKLSSAQ) are compositionally biased toward polar residues. Residues 457–490 (EVGVIVEKLESLLRKQREEIEEMQRDQERIVTEF) are a coiled coil.

Belongs to the protein kinase superfamily. Ser/Thr protein kinase family. WNK subfamily.

The catalysed reaction is L-seryl-[protein] + ATP = O-phospho-L-seryl-[protein] + ADP + H(+). It carries out the reaction L-threonyl-[protein] + ATP = O-phospho-L-threonyl-[protein] + ADP + H(+). In terms of biological role, may regulate flowering time by modulating the photoperiod pathway. This is Probable serine/threonine-protein kinase WNK3 (WNK3) from Arabidopsis thaliana (Mouse-ear cress).